Here is a 352-residue protein sequence, read N- to C-terminus: MGAALTLLGDLIATVSEAAAATGFSVAEIAAGEAAAAIEVQLASVATVEGLTTSEAIAAIGLIPQAYAVISGAPAAIAGFAALLQTVTGVSAVAQVGYRFFSDWDHKVSTVGLYQQPGMAVDLYRPDDYYDILFPGVQTFVHSVQYLDPRHWGPTLFNAISQAFWRVIQNDIPRLTSQELERRTQRYLRDSLARFLEETTWTVINAPVNWYNSLQDYYSTLSPIRPTMVRQVANREGLQISFGHTYDNIDEADSIQQVTERWEAQSQSPNVQSGEFIEKFEAPGGANQRTAPQWMLPLLLGLYGSVTSALKAYEDGPNKKKRKLSRGSSQKTKGTSASAKARHKRRNRSSRS.

Residue G2 is the site of N-myristoyl glycine; by host attachment. Positions 273-308 (SGEFIEKFEAPGGANQRTAPQWMLPLLLGLYGSVTS) are D1. The helical transmembrane segment at 290–310 (TAPQWMLPLLLGLYGSVTSAL) threads the bilayer. The tract at residues 313–352 (YEDGPNKKKRKLSRGSSQKTKGTSASAKARHKRRNRSSRS) is disordered. A DNA-binding region spans residues 313–352 (YEDGPNKKKRKLSRGSSQKTKGTSASAKARHKRRNRSSRS). Residues 316-324 (GPNKKKRKL) carry the Nuclear localization signal motif. The span at 326–338 (RGSSQKTKGTSAS) shows a compositional bias: polar residues. Basic residues predominate over residues 340–352 (KARHKRRNRSSRS).

This sequence belongs to the polyomaviruses capsid protein VP2 family. As to quaternary structure, forms homooligomers, and heterooligomers with VP3 in the endoplasmic reticulum membrane. Interacts (via D1 domain) with VP1. In terms of assembly, interacts (via D1 domain) with VP1. Interacts (via C-terminus) with host SP1, this is probably also the case for VP2; this interaction represses SP1 activation of the SV40 early promoter and participates in virion assembly. Interacts (via nuclear localization signal) with host importin alpha2-beta heterodimer. Oligomerizes with VP3 in the nucleus.

The protein localises to the virion. Its subcellular location is the host nucleus. It localises to the host endoplasmic reticulum. It is found in the host endoplasmic reticulum membrane. Its function is as follows. Structural protein that resides within the core of the capsid surrounded by 72 VP1 pentamers. Following virus endocytosis and trafficking to the endoplasmic reticulum, VP2 and VP3 form oligomers and integrate into the endoplasmic reticulum membrane. Heterooligomer VP2-VP3 may create a viroporin for transporting the viral genome across the endoplasmic reticulum membrane to the cytoplasm. Nuclear entry of the viral DNA involves the selective exposure and importin recognition of VP2 or VP3 nuclear localization signal (shared C-terminus). Plays a role in virion assembly within the nucleus in particular through a DNA-binding domain located in the C-terminal region. An N-terminal myristoylation suggests a scaffold function for virion assembly. The viral progenies exit the cells by lytic release. Isoform VP2 may repress SP1 activation of the SV40 early promoter, via specific protein-protein and protein-DNA interactions. Functionally, structural protein that resides within the core of the capsid surrounded by 72 VP1 pentamers. Following virus entry, VP2 and VP3 form oligomers and integrate into the endoplasmic reticulum membrane. Heterooligomer VP2-VP3 may create a viroporin for transporting the viral genome across the endoplasmic reticulum membrane. Essential for focus formation and virus endoplasmic reticulum-to-cytosol membrane transport, required to recruit selective cellular components to the foci in the ER membrane. Nuclear entry of the viral DNA involves the selective exposure and importin recognition of VP2 or VP3 nuclear localization signal (shared C-terminus). Isoform VP3 represses SP1 activation of the SV40 early promoter, via specific protein-protein and protein-DNA interactions. SP1 additionally participates in recruiting VP3 to the SV40 minichromosome during SV40 assembly. Plays a role in virion assembly within the nucleus. May initiate host cell lysis when associated with VP4. In terms of biological role, viroporin inducing perforation of cellular membranes to trigger virus progeny release. Forms pores of 3 nm inner diameter. VP4 is expressed about 24 hours after the late structural proteins and is not incorporated into the mature virion. The protein is Minor capsid protein VP2 of Simian virus 40 (SV40).